A 291-amino-acid polypeptide reads, in one-letter code: Gamma-sarcoglycan (291 aa).

At Met1–Tyr37 the chain is on the cytoplasmic side. Residues Leu38 to Leu58 form a helical; Signal-anchor for type II membrane protein membrane-spanning segment. Over Lys59–Leu291 the chain is Extracellular. Residue Asn110 is glycosylated (N-linked (GlcNAc...) asparagine). 2 cysteine pairs are disulfide-bonded: Cys265/Cys290 and Cys267/Cys283.

The protein belongs to the sarcoglycan beta/delta/gamma/zeta family. In terms of assembly, interacts with the syntrophin SNTA1. Cross-link to form 2 major subcomplexes: one consisting of SGCB, SGCD and SGCG and the other consisting of SGCB and SGCD. The association between SGCB and SGCG is particularly strong while SGCA is loosely associated with the other sarcoglycans. Interacts with FLNC. In terms of tissue distribution, expressed in skeletal and heart muscle.

It is found in the cell membrane. Its subcellular location is the sarcolemma. The protein resides in the cytoplasm. It localises to the cytoskeleton. In terms of biological role, component of the sarcoglycan complex, a subcomplex of the dystrophin-glycoprotein complex which forms a link between the F-actin cytoskeleton and the extracellular matrix. The sequence is that of Gamma-sarcoglycan (SGCG) from Homo sapiens (Human).